We begin with the raw amino-acid sequence, 258 residues long: uncharacterized protein (258 aa).

This is an uncharacterized protein from Escherichia coli O157:H7.